Here is a 366-residue protein sequence, read N- to C-terminus: Protein-glutamate methylesterase/protein-glutamine glutaminase 2 (366 aa).

A Response regulatory domain is found at 3 to 119 (RLLIADDSAL…SLELDRLRPL (117 aa)). A 4-aspartylphosphate modification is found at aspartate 53. A disordered region spans residues 149 to 168 (AASSPRAKAARRGAARQRAK). Residues 156-166 (KAARRGAARQR) show a composition bias toward basic residues. Positions 171–363 (PAPGLVLIGT…AAVIEWGNAD (193 aa)) constitute a CheB-type methylesterase domain. Residues serine 181, histidine 208, and aspartate 305 contribute to the active site.

It belongs to the CheB family. Post-translationally, phosphorylated by CheA. Phosphorylation of the N-terminal regulatory domain activates the methylesterase activity.

It localises to the cytoplasm. It catalyses the reaction [protein]-L-glutamate 5-O-methyl ester + H2O = L-glutamyl-[protein] + methanol + H(+). It carries out the reaction L-glutaminyl-[protein] + H2O = L-glutamyl-[protein] + NH4(+). Its function is as follows. Involved in chemotaxis. Part of a chemotaxis signal transduction system that modulates chemotaxis in response to various stimuli. Catalyzes the demethylation of specific methylglutamate residues introduced into the chemoreceptors (methyl-accepting chemotaxis proteins or MCP) by CheR. Also mediates the irreversible deamidation of specific glutamine residues to glutamic acid. The protein is Protein-glutamate methylesterase/protein-glutamine glutaminase 2 of Rhodopseudomonas palustris (strain BisB18).